The following is a 2602-amino-acid chain: Non-reducing polyketide synthase SAT8 (2602 aa).

The active-site Nucleophile; for transacylase activity is the C130. Catalysis depends on H249, which acts as the Proton donor/acceptor; for transacylase activity. Residues 379–398 form a disordered region; sequence MLENSTSPPSPAATSSNSHC. Low complexity predominate over residues 382 to 396; the sequence is NSTSPPSPAATSSNS. One can recognise a Ketosynthase family 3 (KS3) domain in the interval 404 to 822; that stretch reads PRDIAIVGMS…GSNAAMVVTQ (419 aa). Residues C571, H706, and H745 each act as for beta-ketoacyl synthase activity in the active site. The tract at residues 926–1216 is malonyl-CoA:ACP transacylase (MAT); that stretch reads FGGQMSTFVG…AMARRSLDSN (291 aa). The interval 1298–1442 is N-terminal hotdog fold; that stretch reads GPLFGLLTFV…GKLDLLSSSE (145 aa). The 321-residue stretch at 1298–1618 folds into the PKS/mFAS DH domain; sequence GPLFGLLTFV…YTRIPRHSMT (321 aa). Residues 1331–1616 are product template (PT) domain; sequence LVIPHIIART…IAYTRIPRHS (286 aa). H1335 serves as the catalytic Proton acceptor; for dehydratase activity. A C-terminal hotdog fold region spans residues 1467 to 1618; that stretch reads GDVSGLQGRS…YTRIPRHSMT (152 aa). Residue D1524 is the Proton donor; for dehydratase activity of the active site. The Carrier domain occupies 1658 to 1733; it reads DTLKQTVGQI…AFVRYISKVV (76 aa). The residue at position 1692 (S1692) is an O-(pantetheine 4'-phosphoryl)serine. The tract at residues 1737–1772 is disordered; the sequence is DDLGTPSHSDNDSHVTGTTATPNSSSASSDTHHGNS. Positions 1752 to 1765 are enriched in low complexity; it reads TGTTATPNSSSASS. A methyltransferase domain region spans residues 1979–2150; it reads VEKVKDDFQG…GYGHVDWTDG (172 aa). The NADPH-binding domain stretch occupies residues 2229–2530; that stretch reads IVVVTGATGS…IPLGEWVRKV (302 aa).

Pantetheine 4'-phosphate is required as a cofactor.

It participates in mycotoxin biosynthesis. Functionally, non-reducing polyketide synthase; part of the satratoxin SC1 cluster involved in the biosynthesis of satratoxins, trichothecene mycotoxins that are associated with human food poisonings. Satratoxins are suggested to be made by products of multiple gene clusters (SC1, SC2 and SC3) that encode 21 proteins in all, including polyketide synthases, acetyltransferases, and other enzymes expected to modify the trichothecene skeleton. SC1 encodes 10 proteins, SAT1 to SAT10. The largest are SAT8, which encodes a putative polyketide synthase (PKS) with a conventional non-reducing architecture, and SAT10, a putative protein containing four ankyrin repeats and thus may be involved in protein scaffolding. The putative short-chain reductase SAT3 may assist the PKS in some capacity. SAT6 contains a secretory lipase domain and acts probably as a trichothecene esterase. SAT5 encodes a putative acetyltransferase, and so, with SAT6, may affect endogenous protection from toxicity. The probable transcription factor SAT9 may regulate the expression of the SC1 cluster. SC2 encodes proteins SAT11 to SAT16, the largest of which encodes the putative reducing PKS SAT13. SAT11 is a cytochrome P450 monooxygenase, while SAT14 and SAT16 are probable acetyltransferases. The SC2 cluster may be regulated by the transcription factor SAT15. SC3 is a small cluster that encodes 5 proteins, SAT17 to SAT21. SAT21 is a putative MFS-type transporter which may have a role in exporting secondary metabolites. The four other proteins putatively encoded in SC3 include the taurine hydroxylase-like protein SAT17, the O-methyltransferase SAT18, the acetyltransferase SAT19, and the Cys6-type zinc finger SAT20, the latter being probably involved in regulation of SC3 expression. This Stachybotrys chartarum (strain CBS 109288 / IBT 7711) (Toxic black mold) protein is Non-reducing polyketide synthase SAT8.